The primary structure comprises 115 residues: T cell receptor beta variable 7-4 (115 aa).

The signal sequence occupies residues 1-21; it reads MGTRLLCWVVLGFLGTDHTGA. An Ig-like domain is found at 22-115; sequence GVSQSPRYKV…SAVYLCASSL (94 aa). Cys-42 and Cys-111 are disulfide-bonded. Residues 67–97 form a disordered region; sequence YSQSDAQRDKSGRPSGRFSAERPERSVSTLK.

In terms of assembly, alpha-beta TR is a heterodimer composed of an alpha and beta chain; disulfide-linked. The alpha-beta TR is associated with the transmembrane signaling CD3 coreceptor proteins to form the TR-CD3 (TcR or TCR). The assembly of alpha-beta TR heterodimers with CD3 occurs in the endoplasmic reticulum where a single alpha-beta TR heterodimer associates with one CD3D-CD3E heterodimer, one CD3G-CD3E heterodimer and one CD247 homodimer forming a stable octameric structure. CD3D-CD3E and CD3G-CD3E heterodimers preferentially associate with TR alpha and TR beta chains, respectively. The association of the CD247 homodimer is the last step of TcR assembly in the endoplasmic reticulum and is required for transport to the cell surface.

Its subcellular location is the cell membrane. In terms of biological role, v region of the variable domain of T cell receptor (TR) beta chain that participates in the antigen recognition. Alpha-beta T cell receptors are antigen specific receptors which are essential to the immune response and are present on the cell surface of T lymphocytes. Recognize peptide-major histocompatibility (MH) (pMH) complexes that are displayed by antigen presenting cells (APC), a prerequisite for efficient T cell adaptive immunity against pathogens. Binding of alpha-beta TR to pMH complex initiates TR-CD3 clustering on the cell surface and intracellular activation of LCK that phosphorylates the ITAM motifs of CD3G, CD3D, CD3E and CD247 enabling the recruitment of ZAP70. In turn ZAP70 phosphorylates LAT, which recruits numerous signaling molecules to form the LAT signalosome. The LAT signalosome propagates signal branching to three major signaling pathways, the calcium, the mitogen-activated protein kinase (MAPK) kinase and the nuclear factor NF-kappa-B (NF-kB) pathways, leading to the mobilization of transcription factors that are critical for gene expression and essential for T cell growth and differentiation. The T cell repertoire is generated in the thymus, by V-(D)-J rearrangement. This repertoire is then shaped by intrathymic selection events to generate a peripheral T cell pool of self-MH restricted, non-autoaggressive T cells. Post-thymic interaction of alpha-beta TR with the pMH complexes shapes TR structural and functional avidity. This is T cell receptor beta variable 7-4 from Homo sapiens (Human).